A 509-amino-acid chain; its full sequence is MEELQGYLKIDRSRERDFLYPLLFQEYIYALAHDHGLNKSILYEPMENLGYDKKYSLIIVKRLITRMYQQKHLIIFTNDSNPNFFFGHNKNLDSQMISEGVAVIVELPFSLRLVSSPESKEIDKSMTTLRSIHSIFPFLEDKLLHLNHVLDILIPYPIHLELLVQTLRSWIQDAPFLHLLRFFLYKYHNWNSLITQKTKMILFFSKENQRFFLFLYNFHVYESESIFVFLRKQSYHLRSTSSRAFLDRTHFYRKIEHFLVDFRNDFHTILWLFKDPFIQYFRFQGKSILSSKGTPLLMKKWKYYLVNLWECHFYFWSQPDRIHINQLSNHFIDFLGYLSSVRPTPSAVRSQMLEKSFIIDIVIKKFDTIVPIIPMIGSLAKAKFCNFSGHPISKPAWADSSDSDIIDRFGRICRNLSHYYSGSSKKKSLYRIKYILRLSCARTLARKHKSTVRSFLKRLGSEFLEEFLMEEEQVLSFILPRISYFSKRLYKERIWYFDIIRINDLTNLS.

This sequence belongs to the intron maturase 2 family. MatK subfamily.

The protein resides in the plastid. It localises to the chloroplast. Usually encoded in the trnK tRNA gene intron. Probably assists in splicing its own and other chloroplast group II introns. In Clematis ligusticifolia (Western white clematis), this protein is Maturase K.